Consider the following 143-residue polypeptide: Peptide methionine sulfoxide reductase MsrB (143 aa).

In terms of domain architecture, MsrB spans 16 to 139; that stretch reads DAELRRRLTP…NSAALNFESR (124 aa). Residues Cys-55, Cys-58, Cys-104, and Cys-107 each contribute to the Zn(2+) site. Cys-128 serves as the catalytic Nucleophile.

Belongs to the MsrB Met sulfoxide reductase family. Requires Zn(2+) as cofactor.

It catalyses the reaction L-methionyl-[protein] + [thioredoxin]-disulfide + H2O = L-methionyl-(R)-S-oxide-[protein] + [thioredoxin]-dithiol. The polypeptide is Peptide methionine sulfoxide reductase MsrB (Burkholderia vietnamiensis (strain G4 / LMG 22486) (Burkholderia cepacia (strain R1808))).